The following is a 535-amino-acid chain: Probable bifunctional tRNA threonylcarbamoyladenosine biosynthesis protein (535 aa).

The tract at residues 1–323 is kae1; sequence MICLGLEGTA…YRTDMVEVNW (323 aa). Fe cation-binding residues include His106, His110, and Tyr127. Residues 127 to 131, Asp159, Gly172, Glu176, and Asn256 contribute to the L-threonylcarbamoyladenylate site; that span reads YVSGG. Fe cation is bound at residue Asp284. One can recognise a Protein kinase domain in the interval 333-535; the sequence is KIPEHLIGKG…DVERRARYVE (203 aa). ATP-binding positions include 339–347 and Lys360; that span reads IGKGAEADI. Asp451 (proton acceptor; for kinase activity) is an active-site residue.

This sequence in the N-terminal section; belongs to the KAE1 / TsaD family. It in the C-terminal section; belongs to the protein kinase superfamily. Tyr protein kinase family. BUD32 subfamily. Component of the KEOPS complex that consists of Kae1, Bud32, Cgi121 and Pcc1; the whole complex dimerizes. It depends on Fe(2+) as a cofactor.

The protein localises to the cytoplasm. It carries out the reaction L-seryl-[protein] + ATP = O-phospho-L-seryl-[protein] + ADP + H(+). The enzyme catalyses L-threonyl-[protein] + ATP = O-phospho-L-threonyl-[protein] + ADP + H(+). The catalysed reaction is L-threonylcarbamoyladenylate + adenosine(37) in tRNA = N(6)-L-threonylcarbamoyladenosine(37) in tRNA + AMP + H(+). With respect to regulation, activity provided by the Kae1 region seems to be regulated via phosphorylation by the protein kinase Bud32, which is itself activated by Cgi121. Required for the formation of a threonylcarbamoyl group on adenosine at position 37 (t(6)A37) in tRNAs that read codons beginning with adenine. Is a component of the KEOPS complex that is probably involved in the transfer of the threonylcarbamoyl moiety of threonylcarbamoyl-AMP (TC-AMP) to the N6 group of A37. The Kae1 domain likely plays a direct catalytic role in this reaction. The Bud32 domain probably displays kinase activity that regulates Kae1 function. In vitro, exhibits low ATPase activity, but does not bind DNA and does not have endonuclease activity. The protein is Probable bifunctional tRNA threonylcarbamoyladenosine biosynthesis protein of Methanocaldococcus jannaschii (strain ATCC 43067 / DSM 2661 / JAL-1 / JCM 10045 / NBRC 100440) (Methanococcus jannaschii).